The sequence spans 112 residues: Transmembrane protein 14C (112 aa).

4 helical membrane-spanning segments follow: residues 7–27 (VVPLHWFGFGYAALVASGGII), 32–52 (AGSVPSLAAGLLFGSLAGLGA), 62–82 (VWVFLATSGTLAGIMGMRFYH), and 88–108 (PAGLIAGASLLMVAKVGVSMF).

It belongs to the TMEM14 family.

It localises to the mitochondrion membrane. Functionally, required for normal heme biosynthesis. The sequence is that of Transmembrane protein 14C (TMEM14C) from Homo sapiens (Human).